The following is a 459-amino-acid chain: Transmembrane protein 143 (459 aa).

A run of 2 helical transmembrane segments spans residues 280-300 (LLNL…GMVV) and 301-321 (LTDL…FMGL). Ser-332 carries the post-translational modification Phosphoserine. The tract at residues 435–459 (GFPKLDPVAPITSEPPQATPSSNIS) is disordered. A compositionally biased stretch (polar residues) spans 448–459 (EPPQATPSSNIS).

It localises to the membrane. This is Transmembrane protein 143 (TMEM143) from Homo sapiens (Human).